We begin with the raw amino-acid sequence, 594 residues long: Aspartate--tRNA(Asp/Asn) ligase (594 aa).

Glu-175 provides a ligand contact to L-aspartate. The interval 199–202 is aspartate; it reads QQFK. L-aspartate contacts are provided by Arg-221 and His-455. Position 221-223 (221-223) interacts with ATP; it reads RDE. Glu-488 contributes to the ATP binding site. Position 495 (Arg-495) interacts with L-aspartate. 540 to 543 is a binding site for ATP; that stretch reads GIDR.

This sequence belongs to the class-II aminoacyl-tRNA synthetase family. Type 1 subfamily. Homodimer.

The protein localises to the cytoplasm. It catalyses the reaction tRNA(Asx) + L-aspartate + ATP = L-aspartyl-tRNA(Asx) + AMP + diphosphate. Aspartyl-tRNA synthetase with relaxed tRNA specificity since it is able to aspartylate not only its cognate tRNA(Asp) but also tRNA(Asn). Reaction proceeds in two steps: L-aspartate is first activated by ATP to form Asp-AMP and then transferred to the acceptor end of tRNA(Asp/Asn). The polypeptide is Aspartate--tRNA(Asp/Asn) ligase (Ruegeria sp. (strain TM1040) (Silicibacter sp.)).